We begin with the raw amino-acid sequence, 293 residues long: UPF0282 protein MK0213 (293 aa).

This sequence belongs to the UPF0282 family.

This Methanopyrus kandleri (strain AV19 / DSM 6324 / JCM 9639 / NBRC 100938) protein is UPF0282 protein MK0213.